We begin with the raw amino-acid sequence, 270 residues long: Hemin import ATP-binding protein HmuV (270 aa).

Residues 2–238 enclose the ABC transporter domain; the sequence is LTVENIEVTL…VTLSQAYGCT (237 aa). 34–41 lines the ATP pocket; that stretch reads GHNGSGKT.

The protein belongs to the ABC transporter superfamily. Heme (hemin) importer (TC 3.A.1.14.5) family. In terms of assembly, the complex is composed of two ATP-binding proteins (HmuV), two transmembrane proteins (HmuU) and a solute-binding protein (HmuT).

The protein resides in the cell inner membrane. Its function is as follows. Part of the ABC transporter complex HmuTUV involved in hemin import. Responsible for energy coupling to the transport system. This Jannaschia sp. (strain CCS1) protein is Hemin import ATP-binding protein HmuV.